The chain runs to 799 residues: LPS-assembly protein LptD (799 aa).

Residues 1–34 (MMHELDLRPHLARFAQRPLALLAWALLQGTSVNA) form the signal peptide.

The protein belongs to the LptD family. In terms of assembly, component of the lipopolysaccharide transport and assembly complex. Interacts with LptE and LptA.

It localises to the cell outer membrane. In terms of biological role, together with LptE, is involved in the assembly of lipopolysaccharide (LPS) at the surface of the outer membrane. The sequence is that of LPS-assembly protein LptD from Albidiferax ferrireducens (strain ATCC BAA-621 / DSM 15236 / T118) (Rhodoferax ferrireducens).